An 86-amino-acid polypeptide reads, in one-letter code: Precursor of CEP4 (86 aa).

An N-terminal signal peptide occupies residues 1-30 (MVSRGCSITVLFRFLIVLLVIQVHFENTKA). A propeptide spanning residues 31 to 64 (ARHAPVVSWSPPEPPKDDFVWYHKINRFKNIEQD) is cleaved from the precursor. The interval 63-86 (QDAFRPTHQGPSQGIGHKNPPGAP) is disordered. 2 positions are modified to hydroxyproline: Pro-68 and Pro-73. A propeptide spanning residues 80-86 (KNPPGAP) is cleaved from the precursor.

Belongs to the C-terminally encoded plant signaling peptide (CEP) family. Interacts with CEP receptors (e.g. CEPR1 and CEPR2). The mature small signaling peptide is generated by proteolytic processing of the longer precursor. As to expression, expressed at low levels in flowers. Present in lateral roots, shoot apical meristem (SAM), flowers and siliques.

It localises to the secreted. The protein localises to the extracellular space. The protein resides in the apoplast. In terms of biological role, extracellular signaling peptide that represses primary root growth rate. Promotes shoot growth and modulates leaf morphology. Regulates systemic nitrogen (N)-demand signaling. Mediates up-regulation of genes involved in N uptake and assimilation pathways. The polypeptide is Precursor of CEP4 (Arabidopsis thaliana (Mouse-ear cress)).